A 291-amino-acid polypeptide reads, in one-letter code: Lactoylglutathione lyase (291 aa).

VOC domains follow at residues 24–149 and 155–283; these read RLLH…LIQR and PLCQ…LVDN. Substrate is bound by residues Arg-31, Asn-82, and His-96. His-96 is a catalytic residue. Glu-145 serves as the catalytic Proton donor/acceptor. Residue Glu-145 coordinates Ni(2+). Catalysis depends on residues Gln-158 and Glu-209. Residue Glu-209 coordinates Ni(2+).

This sequence belongs to the glyoxalase I family. In terms of assembly, monomer. Ni(2+) serves as cofactor. Post-translationally, phosphorylated after gibberellin treatment. In terms of tissue distribution, expressed in callus, stem, leaves, panicles and maturing seeds (at protein level).

It carries out the reaction (R)-S-lactoylglutathione = methylglyoxal + glutathione. It participates in secondary metabolite metabolism; methylglyoxal degradation; (R)-lactate from methylglyoxal: step 1/2. In terms of biological role, catalyzes the conversion of hemimercaptal, formed from methylglyoxal and glutathione, to S-lactoylglutathione. Involved in the detoxifiation of methylglyoxal. Can functionally complement growth defect of a yeast mutant lacking GLY I. Involved in abiotic stress response. Over-expression of GLYI-11 in tobacco increases tolerance to osmotic, oxidative and salt stresses. In Oryza sativa subsp. japonica (Rice), this protein is Lactoylglutathione lyase.